A 208-amino-acid chain; its full sequence is Heat shock protein 26 (208 aa).

A phosphoserine mark is found at serine 44, serine 52, and serine 58. The sHSP domain maps to alanine 71–glutamine 179. A disordered region spans residues asparagine 187–lysine 208. The span at asparagine 191–lysine 208 shows a compositional bias: basic and acidic residues.

Belongs to the small heat shock protein (HSP20) family.

This Drosophila melanogaster (Fruit fly) protein is Heat shock protein 26 (Hsp26).